The sequence spans 338 residues: Nucleoid-associated protein HI_0839 (338 aa).

The protein belongs to the YejK family.

It localises to the cytoplasm. The protein localises to the nucleoid. The polypeptide is Nucleoid-associated protein HI_0839 (Haemophilus influenzae (strain ATCC 51907 / DSM 11121 / KW20 / Rd)).